A 452-amino-acid polypeptide reads, in one-letter code: MASCDEIKEHPRSLSMCGHVGFESLPDQLVDRSIEQGFCFNILCVGETGIGKSTLINTLFNTNFEELESSHFCPCVRLRAQTYELQESNVRLKLTIVNTVGFGDQINKEDSYQPIVDYIDDQFEAYLQEEVKIKRALFNYHDSRIHVCLYFIAPTGHSLRTLDLLTMKSLDNKVNIIPLIAKADTISKSELQKFKMKLMNELVINGVQIYQFPTDDDTTSKINGAMNGHLPFAVVGSMDEIKVGNKMVKGRQYPWGIVQVENENHCDFVKLREMLICTNMEDLREQTHMRHYELYRRCKLQEMGFVDMGPENKPLSLQETYEAKRHEFYGERQRKEEQMKQMFVQRVKEKEAILKEAERELQAKFEHLKRIHQEERMKLEEKRRMLEEESVAFAKKKATCELFPNQSFLASGSSIRKDKDRKKADGASAFCDCLTAQESVRLCISSPRKDMD.

Positions 36–302 constitute a Septin-type G domain; it reads QGFCFNILCV…ELYRRCKLQE (267 aa). The G1 motif stretch occupies residues 46–53; the sequence is GETGIGKS. GTP is bound by residues 46-53, G101, 182-190, G236, and R251; these read GETGIGKS and KADTISKSE. The tract at residues 98 to 101 is G3 motif; it reads NTVG. A G4 motif region spans residues 181 to 184; the sequence is AKAD. S414 is modified (phosphoserine).

It belongs to the TRAFAC class TrmE-Era-EngA-EngB-Septin-like GTPase superfamily. Septin GTPase family. As to quaternary structure, septins polymerize into heterooligomeric protein complexes that form filaments, and can associate with cellular membranes, actin filaments and microtubules. GTPase activity is required for filament formation. Interacts with ADGB. In terms of processing, proteolytically cleaved in vitro in a calmodulin-dependent manner.

It localises to the cytoplasm. It is found in the cytoskeleton. Its subcellular location is the cell projection. The protein localises to the cilium. The protein resides in the flagellum. Its function is as follows. Filament-forming cytoskeletal GTPase. May play a role in cytokinesis (Potential). The sequence is that of Septin-10 from Mus musculus (Mouse).